The primary structure comprises 311 residues: Transcriptional regulatory protein MoaR1 (311 aa).

The ompR/PhoB-type DNA-binding region spans 15 to 117; sequence LNATTAGAVQ…SEPPGYRLLI (103 aa).

This sequence belongs to the AfsR/DnrI/RedD regulatory family.

In terms of biological role, acts as a positive transcriptional regulator of the molybdopterin biosynthesis moa1 locus, promoting the expression of the moaA1B1C1D1 genes. This Mycobacterium bovis (strain BCG / Pasteur 1173P2) protein is Transcriptional regulatory protein MoaR1 (moaR1).